We begin with the raw amino-acid sequence, 1666 residues long: MRRPGLGGPCPLLLLLLLPAATSASGSSPSPSPSPIEKAVVPSHQAGVAACHCCLDQTPKSSRCTRASCRVRNCPPAKCTGLEGCLTPTPSVPSPSRSPVEKSQVSLNWQPLTLQEARALLRQRRPRGPWARALLKRRPPHRAPAGQARVLCPLICHNGGVCVKPDRCLCPPDFAGKFCQLHSSGARPPAPAMPGLTRSVYTMPLANHRDDEHGVASMVSVHVEHPQEASVVVHQVERVSGPWEEANPEALARAEAAARAEAAAPYTVLAQSAPREDGYSDASGFGYCFRELRGSECASPLPGLRTQEVCCRGEGLAWGVHDCHPCAEHLRNSNQVSGPNGPCPPGFERVNGSCVDVDECATGGRCQHGECANTRGGYTCVCPDGFLLDSSRSSCISQHVISEAKGPCYRVLHDGGCSLPILRNITKQICCCSRVGKAWGRGCQLCPPYGSEGFREICPAGPGYHYSASDLRYNTRPLNQDPPRVTFNQPRVPPATPRPPTGFLPTRRPEPRPDPGPQPEPRPRPEPRPRPESRPRPEPRPRPEPRPQPESQPRPESRPRPESQPWPEFPLPSIPAWTGPEIPESGPSSSMCQRNPQVCGPGRCVPRPSGYTCACDPGFRLGPQGTRCIDIDECRRVPTPCAPGRCENTPGSFRCVCGTGFQAGPRATECLDVDECRRVPPPCDRGRCENTPGSFLCVCPAGYQAAPHGASCQDVDECTQSPGLCGRGVCENLPGSFRCVCPAGFRGSACEEDVDECAQQPPPCGPGRCDNTAGSFHCACPAGFRSRGPGAPCQDVDECSRSPSPCAYGRCENTEGSFKCVCPTGFQPNAAGSECEDVDECENRLACPGQECVNSPGSFQCRACPVGHHLHRGRCTDVDECSSGTPCGLHGQCTNTKGSFHCSCSTGYRAPSGQPGPCADINECLEGDFCFPHGECLNTDGSFTCTCAPGYRPGPRGASCLDVDECSEEDLCQSGICTNTDGSFECICPPGHRAGPDLASCLDIDECRERGPALCGSQRCENSPGSYRCVRDCDPGYHPGPEGTCDDIDECREYGSAICGAQRCENTPGSYRCTPACDPGYQPTPGGGCQDVDECRNRSFCGAHAMCQNLPGSFQCVCDQGYEGARDGRHCVDVNECETLQGVCGSALCENVEGSFLCVCPNSPEEFDPMTGRCVPPRAPAGTFPGSQPQAPASPSLPARPPAPPPPRRPSPPRQGPVSSGRRECYFDTAAPDACDNILARNVTWQECCCTVGEGWGSGCRIQQCPGTETAEYQSLCPHGRGYLVPSGDLSARRDVDECQLFQDQVCKSGVCVNTAPGYSCYCSNGFYYHAHRLECVDNDECADEEPACEGGRCVNTVGSYHCTCEPPLVLDGSRRRCVSNESQSLDDNLGVCWQEVGPDLVCSRPRLDRQATYTECCCLYGEAWGMDCALCPAQDSDDFEALCNVLRPPAYGPPRPGGFGIPYEYGPDIGPPYQSLPYGPDLYPPPVLPYDPYPPPPGPFARREAPYGAPPFDMPDFEDDGGPYGESETPDPPSRGTGWPYRSRDTRGSFPEPEESSERGSYTGALSEPYEGLEAEECGILDGCPHGRCVRVPEGFTCDCFDGYRLDITRMSCVDVNECDEAEATSPLCVNARCVNTDGSFRCICRPGFAPTHQPHHCAPARPRA.

The signal sequence occupies residues 1 to 24 (MRRPGLGGPCPLLLLLLLPAATSA). One can recognise an EGF-like 1 domain in the interval 148–180 (ARVLCPLICHNGGVCVKPDRCLCPPDFAGKFCQ). Cystine bridges form between cysteine 152–cysteine 162, cysteine 156–cysteine 168, cysteine 170–cysteine 179, cysteine 288–cysteine 310, cysteine 297–cysteine 323, and cysteine 311–cysteine 326. The region spanning 286–338 (GYCFRELRGSECASPLPGLRTQEVCCRGEGLAWGVHDCHPCAEHLRNSNQVSG) is the TB 1 domain. Asparagine 351 is a glycosylation site (N-linked (GlcNAc...) asparagine). An EGF-like 2; calcium-binding domain is found at 356-396 (DVDECATGGRCQHGECANTRGGYTCVCPDGFLLDSSRSSCI). Disulfide bonds link cysteine 360-cysteine 371, cysteine 366-cysteine 380, cysteine 382-cysteine 395, cysteine 408-cysteine 430, cysteine 417-cysteine 443, cysteine 431-cysteine 446, and cysteine 432-cysteine 458. The TB 2 domain maps to 406–458 (GPCYRVLHDGGCSLPILRNITKQICCCSRVGKAWGRGCQLCPPYGSEGFREIC). An N-linked (GlcNAc...) asparagine glycan is attached at asparagine 424. Positions 473–590 (YNTRPLNQDP…EIPESGPSSS (118 aa)) are disordered. A compositionally biased stretch (pro residues) spans 491 to 502 (RVPPATPRPPTG). The segment covering 521–561 (PRPRPEPRPRPESRPRPEPRPRPEPRPQPESQPRPESRPRP) has biased composition (basic and acidic residues). The segment covering 562 to 573 (ESQPWPEFPLPS) has biased composition (pro residues). Over residues 579-590 (GPEIPESGPSSS) the composition is skewed to low complexity. The EGF-like 3 domain occupies 588–629 (SSSMCQRNPQVCGPGRCVPRPSGYTCACDPGFRLGPQGTRCI). 30 disulfides stabilise this stretch: cysteine 592/cysteine 604, cysteine 599/cysteine 613, cysteine 615/cysteine 628, cysteine 634/cysteine 646, cysteine 641/cysteine 655, cysteine 657/cysteine 670, cysteine 676/cysteine 688, cysteine 683/cysteine 697, cysteine 699/cysteine 712, cysteine 718/cysteine 730, cysteine 725/cysteine 739, cysteine 741/cysteine 750, cysteine 757/cysteine 769, cysteine 764/cysteine 778, cysteine 780/cysteine 793, cysteine 799/cysteine 811, cysteine 806/cysteine 820, cysteine 822/cysteine 835, cysteine 881/cysteine 893, cysteine 887/cysteine 902, cysteine 904/cysteine 918, cysteine 924/cysteine 936, cysteine 930/cysteine 945, cysteine 947/cysteine 960, cysteine 966/cysteine 977, cysteine 972/cysteine 986, cysteine 988/cysteine 1001, cysteine 1095/cysteine 1107, cysteine 1101/cysteine 1116, and cysteine 1118/cysteine 1131. The 42-residue stretch at 630–671 (DIDECRRVPTPCAPGRCENTPGSFRCVCGTGFQAGPRATECL) folds into the EGF-like 4; calcium-binding domain. The EGF-like 5; calcium-binding domain occupies 672–713 (DVDECRRVPPPCDRGRCENTPGSFLCVCPAGYQAAPHGASCQ). One can recognise an EGF-like 6; calcium-binding domain in the interval 714-751 (DVDECTQSPGLCGRGVCENLPGSFRCVCPAGFRGSACE). The EGF-like 7; calcium-binding domain occupies 753-794 (DVDECAQQPPPCGPGRCDNTAGSFHCACPAGFRSRGPGAPCQ). An EGF-like 8; calcium-binding domain is found at 795 to 836 (DVDECSRSPSPCAYGRCENTEGSFKCVCPTGFQPNAAGSECE). Positions 877-919 (DVDECSSGTPCGLHGQCTNTKGSFHCSCSTGYRAPSGQPGPCA) constitute an EGF-like 9; calcium-binding domain. In terms of domain architecture, EGF-like 10; calcium-binding spans 920 to 961 (DINECLEGDFCFPHGECLNTDGSFTCTCAPGYRPGPRGASCL). The 41-residue stretch at 962–1002 (DVDECSEEDLCQSGICTNTDGSFECICPPGHRAGPDLASCL) folds into the EGF-like 11; calcium-binding domain. In terms of domain architecture, EGF-like 12; calcium-binding spans 1091–1132 (DVDECRNRSFCGAHAMCQNLPGSFQCVCDQGYEGARDGRHCV). N-linked (GlcNAc...) asparagine glycosylation is present at asparagine 1097. Residues 1171–1221 (TGRCVPPRAPAGTFPGSQPQAPASPSLPARPPAPPPPRRPSPPRQGPVSSG) form a disordered region. Positions 1185–1197 (PGSQPQAPASPSL) are enriched in low complexity. Pro residues predominate over residues 1198-1215 (PARPPAPPPPRRPSPPRQ). Positions 1223–1277 (RECYFDTAAPDACDNILARNVTWQECCCTVGEGWGSGCRIQQCPGTETAEYQSLC) constitute a TB 3 domain. 10 disulfides stabilise this stretch: cysteine 1225–cysteine 1248, cysteine 1235–cysteine 1260, cysteine 1249–cysteine 1265, cysteine 1250–cysteine 1277, cysteine 1299–cysteine 1312, cysteine 1307–cysteine 1321, cysteine 1323–cysteine 1336, cysteine 1342–cysteine 1354, cysteine 1349–cysteine 1363, and cysteine 1365–cysteine 1378. Residue asparagine 1242 is glycosylated (N-linked (GlcNAc...) asparagine). Positions 1295–1337 (DVDECQLFQDQVCKSGVCVNTAPGYSCYCSNGFYYHAHRLECV) constitute an EGF-like 13; calcium-binding domain. An EGF-like 14; calcium-binding domain is found at 1338–1379 (DNDECADEEPACEGGRCVNTVGSYHCTCEPPLVLDGSRRRCV). N-linked (GlcNAc...) asparagine glycosylation occurs at asparagine 1381. The region spanning 1391 to 1444 (GVCWQEVGPDLVCSRPRLDRQATYTECCCLYGEAWGMDCALCPAQDSDDFEALC) is the TB 4 domain. 4 disulfides stabilise this stretch: cysteine 1393–cysteine 1417, cysteine 1403–cysteine 1429, cysteine 1418–cysteine 1432, and cysteine 1419–cysteine 1444. Over residues 1488 to 1500 (VLPYDPYPPPPGP) the composition is skewed to pro residues. The interval 1488 to 1566 (VLPYDPYPPP…SSERGSYTGA (79 aa)) is disordered. Threonine 1564 is modified (phosphothreonine). EGF-like domains are found at residues 1575–1615 (EAEE…MSCV) and 1616–1660 (DVNE…HHCA). 6 disulfides stabilise this stretch: cysteine 1579–cysteine 1590, cysteine 1585–cysteine 1599, cysteine 1601–cysteine 1614, cysteine 1620–cysteine 1635, cysteine 1630–cysteine 1644, and cysteine 1646–cysteine 1659.

It belongs to the LTBP family. Forms part of the large latent transforming growth factor beta precursor complex; removal is essential for activation of complex. Interacts with LTBP1 and TGFB1. Interacts with EFEMP2; this interaction promotes fibrillar deposition of EFEMP2. In terms of processing, contains hydroxylated asparagine residues.

Its subcellular location is the secreted. The protein resides in the extracellular space. The protein localises to the extracellular matrix. Key regulator of transforming growth factor beta (TGFB1, TGFB2 and TGFB3) that controls TGF-beta activation by maintaining it in a latent state during storage in extracellular space. Associates specifically via disulfide bonds with the Latency-associated peptide (LAP), which is the regulatory chain of TGF-beta, and regulates integrin-dependent activation of TGF-beta. The polypeptide is Latent-transforming growth factor beta-binding protein 4 (Ltbp4) (Mus musculus (Mouse)).